The primary structure comprises 418 residues: Xanthosine permease (418 aa).

Topologically, residues 1 to 9 (MSIAMRLKV) are cytoplasmic. The chain crosses the membrane as a helical span at residues 10 to 30 (MSFLQYFIWGSWLVTLGSYMI). Residues 31 to 41 (NTLHFTGANVG) are Periplasmic-facing. The chain crosses the membrane as a helical span at residues 42 to 62 (MVYSSKGIAAIIMPGIMGIIA). The Cytoplasmic portion of the chain corresponds to 63–70 (DKWLRAER). 2 consecutive transmembrane segments (helical) span residues 71-91 (AYMLCHLVCAGVLFYAASVTD) and 92-112 (PDMMFWVMLVNAMAFMPTIAL). Residues 113-136 (SNSVSYSCLAQAGLDPVTAFPPIR) are Cytoplasmic-facing. The chain crosses the membrane as a helical span at residues 137-157 (VFGTVGFIVAMWAVSLLHLEL). Topologically, residues 158-159 (SS) are periplasmic. Residues 160-180 (LQLYIASGASLLLSAYALTLP) traverse the membrane as a helical segment. Residues 181-209 (KIPVAEKKATTSLASKLGLDAFVLFKNPR) are Cytoplasmic-facing. Residues 210–230 (MAIFFLFAMMLGAVLQITNVF) traverse the membrane as a helical segment. At 231–254 (GNPFLHDFARNPEFADSFVVKYPS) the chain is on the periplasmic side. The chain crosses the membrane as a helical span at residues 255–275 (ILLSVSQMAEVGFILTIPFFL). Residues 276–277 (KR) lie on the Cytoplasmic side of the membrane. A helical membrane pass occupies residues 278–298 (FGIKTVMLMSMVAWTLRFGFF). The Periplasmic segment spans residues 299–306 (AYGDPSTT). A helical transmembrane segment spans residues 307 to 327 (GFILLLLSMIVYGCAFDFFNI). Over 328–348 (SGSVFVEQEVDSSIRASAQGL) the chain is Cytoplasmic. Residues 349–369 (FMTMVNGVGAWVGSILSGMAV) traverse the membrane as a helical segment. Topologically, residues 370–381 (DYFSVDGVKDWQ) are periplasmic. A helical transmembrane segment spans residues 382–402 (TIWLVFAGYALFLAVIFFFGF). The Cytoplasmic segment spans residues 403–418 (KYNHDPEKIKHRAVTH).

It belongs to the major facilitator superfamily. Nucleoside:H(+) symporter (NHS) (TC 2.A.1.10) family.

Its subcellular location is the cell inner membrane. The enzyme catalyses xanthosine(in) + H(+)(in) = xanthosine(out) + H(+)(out). Transport is abolished by the proton uncoupler 2,4-dinitrophenol. In terms of biological role, uptake of xanthosine. Can also transport other nucleosides such as inosine, adenosine, cytidine, uridine and thymidine. Transport is driven by a proton motive force. This Escherichia coli (strain K12) protein is Xanthosine permease.